Here is an 83-residue protein sequence, read N- to C-terminus: Major outer membrane lipoprotein (83 aa).

A signal peptide spans 1 to 19 (MNNVLKFSALALAAVLATG). C20 carries the N-palmitoyl cysteine lipid modification. C20 carries the S-diacylglycerol cysteine lipid modification.

It localises to the cell outer membrane. This Pseudomonas aeruginosa (strain ATCC 15692 / DSM 22644 / CIP 104116 / JCM 14847 / LMG 12228 / 1C / PRS 101 / PAO1) protein is Major outer membrane lipoprotein (oprI).